Consider the following 91-residue polypeptide: Small ribosomal subunit protein uS19 (91 aa).

The protein belongs to the universal ribosomal protein uS19 family.

Functionally, protein S19 forms a complex with S13 that binds strongly to the 16S ribosomal RNA. In Methylacidiphilum infernorum (isolate V4) (Methylokorus infernorum (strain V4)), this protein is Small ribosomal subunit protein uS19.